Consider the following 216-residue polypeptide: 3-isopropylmalate dehydratase small subunit (216 aa).

It belongs to the LeuD family. LeuD type 1 subfamily. In terms of assembly, heterodimer of LeuC and LeuD.

The enzyme catalyses (2R,3S)-3-isopropylmalate = (2S)-2-isopropylmalate. The protein operates within amino-acid biosynthesis; L-leucine biosynthesis; L-leucine from 3-methyl-2-oxobutanoate: step 2/4. Its function is as follows. Catalyzes the isomerization between 2-isopropylmalate and 3-isopropylmalate, via the formation of 2-isopropylmaleate. In Albidiferax ferrireducens (strain ATCC BAA-621 / DSM 15236 / T118) (Rhodoferax ferrireducens), this protein is 3-isopropylmalate dehydratase small subunit.